A 428-amino-acid chain; its full sequence is Serine--tRNA ligase (428 aa).

An L-serine-binding site is contributed by 235–237 (TAE). 266-268 (RSE) serves as a coordination point for ATP. Residue glutamate 289 participates in L-serine binding. 353 to 356 (EISS) is a binding site for ATP. Serine 389 lines the L-serine pocket.

The protein belongs to the class-II aminoacyl-tRNA synthetase family. Type-1 seryl-tRNA synthetase subfamily. In terms of assembly, homodimer. The tRNA molecule binds across the dimer.

Its subcellular location is the cytoplasm. The enzyme catalyses tRNA(Ser) + L-serine + ATP = L-seryl-tRNA(Ser) + AMP + diphosphate + H(+). It catalyses the reaction tRNA(Sec) + L-serine + ATP = L-seryl-tRNA(Sec) + AMP + diphosphate + H(+). Its pathway is aminoacyl-tRNA biosynthesis; selenocysteinyl-tRNA(Sec) biosynthesis; L-seryl-tRNA(Sec) from L-serine and tRNA(Sec): step 1/1. Its function is as follows. Catalyzes the attachment of serine to tRNA(Ser). Is also able to aminoacylate tRNA(Sec) with serine, to form the misacylated tRNA L-seryl-tRNA(Sec), which will be further converted into selenocysteinyl-tRNA(Sec). This Shewanella loihica (strain ATCC BAA-1088 / PV-4) protein is Serine--tRNA ligase.